Consider the following 67-residue polypeptide: Large ribosomal subunit protein eL24 (67 aa).

Residues Cys-7, Cys-10, Cys-33, and Cys-37 each coordinate Zn(2+). The segment at 7 to 37 adopts a C4-type zinc-finger fold; the sequence is CSYCGKEFEPGTGKMYVRNDGRVYFFCSRKC.

This sequence belongs to the eukaryotic ribosomal protein eL24 family. In terms of assembly, part of the 50S ribosomal subunit. Forms a cluster with proteins L3 and L14. Zn(2+) is required as a cofactor.

In terms of biological role, binds to the 23S rRNA. The protein is Large ribosomal subunit protein eL24 of Thermococcus sibiricus (strain DSM 12597 / MM 739).